Consider the following 448-residue polypeptide: Putative vacuolar cation/proton exchanger 6 (448 aa).

The Cytoplasmic segment spans residues 31–81; sequence MGLVNEVELKSLLEQETDSPQTNAASLMEQGSLRERRAKAPRNSVVQSFKI. A helical membrane pass occupies residues 82-102; the sequence is VILSNKLNLLLPFGPLAILVH. Residues 103–109 lie on the Extracellular side of the membrane; the sequence is YLTDNKG. A helical membrane pass occupies residues 110–130; it reads WFFLLSLVGITPLAERLGYAT. Residues 131-141 are Cytoplasmic-facing; the sequence is EQLSCYTGATV. The helical transmembrane segment at 142-162 threads the bilayer; that stretch reads GGLLNATFGNVIELIISIIAL. The cation selection stretch occupies residues 150-185; it reads GNVIELIISIIALKNGMIRVVQLTLLGSILSNILLV. Residues 163–178 are Extracellular-facing; it reads KNGMIRVVQLTLLGSI. The chain crosses the membrane as a helical span at residues 179–199; that stretch reads LSNILLVLGCAFFCGGLVFPG. The Cytoplasmic segment spans residues 200–209; it reads KDQVFDKRNA. A helical membrane pass occupies residues 210-230; that stretch reads VVSSGMLLMAVMGLLFPTFLH. Topologically, residues 231–243 are extracellular; sequence YTHSEVHAGSSEL. A helical transmembrane segment spans residues 244–264; sequence ALSRFISCIMLVAYAAYLFFQ. The Cytoplasmic portion of the chain corresponds to 265–295; that stretch reads LKSQPSFYTEKTNQNEETSNDDEDPEISKWE. Residues 296 to 316 traverse the membrane as a helical segment; the sequence is AIIWLSIFTAWVSLLSGYLVD. At 317–334 the chain is on the extracellular side; sequence AIEGTSVSWKIPISFISV. A helical membrane pass occupies residues 335 to 355; it reads ILLPIVGNAAEHAGAIMFAMK. Positions 341–376 are cation selection; that stretch reads GNAAEHAGAIMFAMKDKLDLSLGVAIGSSIQISMFA. Residues 356-363 lie on the Cytoplasmic side of the membrane; that stretch reads DKLDLSLG. A helical membrane pass occupies residues 364-384; that stretch reads VAIGSSIQISMFAVPFCVVIG. The Extracellular portion of the chain corresponds to 385–393; the sequence is WMMGAQMDL. The helical transmembrane segment at 394 to 414 threads the bilayer; it reads NLQLFETATLLITVIVVAFFL. At 415 to 425 the chain is on the cytoplasmic side; the sequence is QLEGTSNYFKR. The chain crosses the membrane as a helical span at residues 426-446; the sequence is LMLILCYLIVAASFFVHEDPH. The Extracellular portion of the chain corresponds to 447–448; that stretch reads QG.

The protein belongs to the Ca(2+):cation antiporter (CaCA) (TC 2.A.19) family. Cation/proton exchanger (CAX) subfamily.

It localises to the vacuole membrane. Functionally, vacuolar cation/proton exchanger (CAX). Translocates Ca(2+) and other metal ions into vacuoles using the proton gradient formed by H(+)-ATPase and H(+)-pyrophosphatase. This is Putative vacuolar cation/proton exchanger 6 (CAX6) from Arabidopsis thaliana (Mouse-ear cress).